We begin with the raw amino-acid sequence, 55 residues long: Large ribosomal subunit protein bL33 (55 aa).

It belongs to the bacterial ribosomal protein bL33 family.

The protein is Large ribosomal subunit protein bL33 of Chelativorans sp. (strain BNC1).